Here is a 368-residue protein sequence, read N- to C-terminus: UDP-N-acetylglucosamine--N-acetylmuramyl-(pentapeptide) pyrophosphoryl-undecaprenol N-acetylglucosamine transferase (368 aa).

Residues 13–15, N127, R168, S200, I254, and Q299 contribute to the UDP-N-acetyl-alpha-D-glucosamine site; that span reads TGG.

This sequence belongs to the glycosyltransferase 28 family. MurG subfamily.

The protein resides in the cell inner membrane. The enzyme catalyses di-trans,octa-cis-undecaprenyl diphospho-N-acetyl-alpha-D-muramoyl-L-alanyl-D-glutamyl-meso-2,6-diaminopimeloyl-D-alanyl-D-alanine + UDP-N-acetyl-alpha-D-glucosamine = di-trans,octa-cis-undecaprenyl diphospho-[N-acetyl-alpha-D-glucosaminyl-(1-&gt;4)]-N-acetyl-alpha-D-muramoyl-L-alanyl-D-glutamyl-meso-2,6-diaminopimeloyl-D-alanyl-D-alanine + UDP + H(+). It functions in the pathway cell wall biogenesis; peptidoglycan biosynthesis. Functionally, cell wall formation. Catalyzes the transfer of a GlcNAc subunit on undecaprenyl-pyrophosphoryl-MurNAc-pentapeptide (lipid intermediate I) to form undecaprenyl-pyrophosphoryl-MurNAc-(pentapeptide)GlcNAc (lipid intermediate II). This Parabacteroides distasonis (strain ATCC 8503 / DSM 20701 / CIP 104284 / JCM 5825 / NCTC 11152) protein is UDP-N-acetylglucosamine--N-acetylmuramyl-(pentapeptide) pyrophosphoryl-undecaprenol N-acetylglucosamine transferase.